The sequence spans 190 residues: Ubiquinol-cytochrome c reductase iron-sulfur subunit (190 aa).

The chain crosses the membrane as a helical span at residues Phe18 to Val39. Residues Gly95–Lys188 enclose the Rieske domain. The [2Fe-2S] cluster site is built by Cys132, His134, Cys152, and His155. Cys137 and Cys154 are joined by a disulfide.

This sequence belongs to the Rieske iron-sulfur protein family. The main subunits of complex b-c1 are: cytochrome b, cytochrome c1 and the Rieske protein. It depends on [2Fe-2S] cluster as a cofactor.

The protein localises to the cell membrane. The catalysed reaction is a quinol + 2 Fe(III)-[cytochrome c](out) = a quinone + 2 Fe(II)-[cytochrome c](out) + 2 H(+)(out). Component of the ubiquinol-cytochrome c reductase complex (complex III or cytochrome b-c1 complex), which is a respiratory chain that generates an electrochemical potential coupled to ATP synthesis. The chain is Ubiquinol-cytochrome c reductase iron-sulfur subunit (petA) from Paracoccus denitrificans.